The following is a 209-amino-acid chain: Uracil phosphoribosyltransferase (209 aa).

Residues Arg-79, Arg-104, and 131-139 (DPMLATGGS) contribute to the 5-phospho-alpha-D-ribose 1-diphosphate site. Uracil contacts are provided by residues Ile-194 and 199-201 (GDA). Asp-200 is a 5-phospho-alpha-D-ribose 1-diphosphate binding site.

The protein belongs to the UPRTase family. Mg(2+) serves as cofactor.

It carries out the reaction UMP + diphosphate = 5-phospho-alpha-D-ribose 1-diphosphate + uracil. The protein operates within pyrimidine metabolism; UMP biosynthesis via salvage pathway; UMP from uracil: step 1/1. With respect to regulation, allosterically activated by GTP. Functionally, catalyzes the conversion of uracil and 5-phospho-alpha-D-ribose 1-diphosphate (PRPP) to UMP and diphosphate. The sequence is that of Uracil phosphoribosyltransferase from Citrifermentans bemidjiense (strain ATCC BAA-1014 / DSM 16622 / JCM 12645 / Bem) (Geobacter bemidjiensis).